The chain runs to 179 residues: Bifunctional protein PyrR (179 aa).

Positions 100–112 (VILVDDVLFTGRT) match the PRPP-binding motif.

The protein belongs to the purine/pyrimidine phosphoribosyltransferase family. PyrR subfamily. As to quaternary structure, homodimer and homohexamer; in equilibrium.

The catalysed reaction is UMP + diphosphate = 5-phospho-alpha-D-ribose 1-diphosphate + uracil. Regulates transcriptional attenuation of the pyrimidine nucleotide (pyr) operon by binding in a uridine-dependent manner to specific sites on pyr mRNA. This disrupts an antiterminator hairpin in the RNA and favors formation of a downstream transcription terminator, leading to a reduced expression of downstream genes. Functionally, also displays a weak uracil phosphoribosyltransferase activity which is not physiologically significant. In Geobacillus sp. (strain WCH70), this protein is Bifunctional protein PyrR.